Consider the following 102-residue polypeptide: Large ribosomal subunit protein bL21 (102 aa).

This sequence belongs to the bacterial ribosomal protein bL21 family. In terms of assembly, part of the 50S ribosomal subunit. Contacts protein L20.

In terms of biological role, this protein binds to 23S rRNA in the presence of protein L20. The sequence is that of Large ribosomal subunit protein bL21 from Nocardioides sp. (strain ATCC BAA-499 / JS614).